Consider the following 177-residue polypeptide: Large ribosomal subunit protein uL6 (177 aa).

Belongs to the universal ribosomal protein uL6 family. In terms of assembly, part of the 50S ribosomal subunit.

This protein binds to the 23S rRNA, and is important in its secondary structure. It is located near the subunit interface in the base of the L7/L12 stalk, and near the tRNA binding site of the peptidyltransferase center. The chain is Large ribosomal subunit protein uL6 from Pectobacterium carotovorum subsp. carotovorum (strain PC1).